Reading from the N-terminus, the 331-residue chain is Biotin synthase (331 aa).

Positions 52–281 (FFQNKVKLNM…TKEIRVSGGR (230 aa)) constitute a Radical SAM core domain. [4Fe-4S] cluster-binding residues include cysteine 70, cysteine 74, and cysteine 77. Residues cysteine 114, cysteine 146, cysteine 206, and arginine 276 each contribute to the [2Fe-2S] cluster site.

The protein belongs to the radical SAM superfamily. Biotin synthase family. Homodimer. [4Fe-4S] cluster is required as a cofactor. [2Fe-2S] cluster serves as cofactor.

It catalyses the reaction (4R,5S)-dethiobiotin + (sulfur carrier)-SH + 2 reduced [2Fe-2S]-[ferredoxin] + 2 S-adenosyl-L-methionine = (sulfur carrier)-H + biotin + 2 5'-deoxyadenosine + 2 L-methionine + 2 oxidized [2Fe-2S]-[ferredoxin]. Its pathway is cofactor biosynthesis; biotin biosynthesis; biotin from 7,8-diaminononanoate: step 2/2. Functionally, catalyzes the conversion of dethiobiotin (DTB) to biotin by the insertion of a sulfur atom into dethiobiotin via a radical-based mechanism. The polypeptide is Biotin synthase (Bacillus pumilus (strain SAFR-032)).